Reading from the N-terminus, the 172-residue chain is Protein/nucleic acid deglycase 2 (172 aa).

The PfpI endopeptidase domain maps to 3–171 (KKIAVLITDE…FNREALRLLG (169 aa)). Cysteine 104 functions as the Nucleophile in the catalytic mechanism.

The protein belongs to the peptidase C56 family. In terms of assembly, exists in monomeric, trimeric, and hexameric forms.

The protein localises to the cytoplasm. It catalyses the reaction N(omega)-(1-hydroxy-2-oxopropyl)-L-arginyl-[protein] + H2O = lactate + L-arginyl-[protein] + H(+). It carries out the reaction N(6)-(1-hydroxy-2-oxopropyl)-L-lysyl-[protein] + H2O = lactate + L-lysyl-[protein] + H(+). The catalysed reaction is S-(1-hydroxy-2-oxopropyl)-L-cysteinyl-[protein] + H2O = lactate + L-cysteinyl-[protein] + H(+). The enzyme catalyses N(omega)-(1-hydroxy-2-oxoethyl)-L-arginyl-[protein] + H2O = L-arginyl-[protein] + glycolate + H(+). It catalyses the reaction N(6)-(1-hydroxy-2-oxoethyl)-L-lysyl-[protein] + H2O = glycolate + L-lysyl-[protein] + H(+). It carries out the reaction S-(1-hydroxy-2-oxoethyl)-L-cysteinyl-[protein] + H2O = glycolate + L-cysteinyl-[protein] + H(+). The catalysed reaction is N(2)-(1-hydroxy-2-oxopropyl)-dGTP + H2O = lactate + dGTP + H(+). The enzyme catalyses N(2)-(1-hydroxy-2-oxopropyl)-GTP + H2O = lactate + GTP + H(+). It catalyses the reaction N(2)-(1-hydroxy-2-oxopropyl)-GDP + H2O = lactate + GDP + H(+). It carries out the reaction N(2)-(1-hydroxy-2-oxopropyl)-GMP + H2O = lactate + GMP + H(+). The catalysed reaction is N(2)-(1-hydroxy-2-oxoethyl)-dGTP + H2O = dGTP + glycolate + H(+). The enzyme catalyses N(2)-(1-hydroxy-2-oxoethyl)-GTP + H2O = glycolate + GTP + H(+). It catalyses the reaction N(2)-(1-hydroxy-2-oxoethyl)-GDP + H2O = glycolate + GDP + H(+). It carries out the reaction N(2)-(1-hydroxy-2-oxoethyl)-GMP + H2O = glycolate + GMP + H(+). The catalysed reaction is an N(2)-(1-hydroxy-2-oxopropyl)-guanosine in RNA + H2O = a guanosine in RNA + lactate + H(+). The enzyme catalyses an N(2)-(1-hydroxy-2-oxopropyl)-2'-deoxyguanosine in DNA + H2O = a 2'-deoxyguanosine in DNA + lactate + H(+). It catalyses the reaction an N(2)-(1-hydroxy-2-oxoethyl)-guanosine in RNA + H2O = a guanosine in RNA + glycolate + H(+). It carries out the reaction an N(2)-(1-hydroxy-2-oxoethyl)-2'-deoxyguanosine in DNA + H2O = a 2'-deoxyguanosine in DNA + glycolate + H(+). Its activity is regulated as follows. Glyoxalase activity is inhibited by zinc ions at pH 7.0. In terms of biological role, protein and nucleotide deglycase that catalyzes the deglycation of the Maillard adducts formed between amino groups of proteins or nucleotides and reactive carbonyl groups of glyoxals. Thus, functions as a protein deglycase that repairs methylglyoxal- and glyoxal-glycated proteins, and releases repaired proteins and lactate or glycolate, respectively. Deglycates cysteine, arginine and lysine residues in proteins, and thus reactivates these proteins by reversing glycation by glyoxals. Is able to repair glycated serum albumin, collagen, glyceraldehyde-3-phosphate dehydrogenase, and fructose biphosphate aldolase. Acts on early glycation intermediates (hemithioacetals and aminocarbinols), preventing the formation of advanced glycation endproducts (AGE) that cause irreversible damage. Also functions as a nucleotide deglycase able to repair glycated guanine in the free nucleotide pool (GTP, GDP, GMP, dGTP) and in DNA and RNA. Is thus involved in a major nucleotide repair system named guanine glycation repair (GG repair), dedicated to reversing methylglyoxal and glyoxal damage via nucleotide sanitization and direct nucleic acid repair. In vitro, prevents acrylamide formation in asparagine/glyoxal and asparagine/sugar mixtures at 55 degrees Celsius, likely by degrading asparagine/glyoxal Maillard adducts formed at high temperatures. Also displays an apparent glyoxalase activity that in fact reflects its deglycase activity. Is a general stress protein; is required for the protection of bacterial cells against many environmental stresses, including oxidative, thermal, osmotic, UV, and pH stresses. And plays an important role in protection against electrophile/carbonyl stress. The protein is Protein/nucleic acid deglycase 2 (yhbO) of Escherichia coli (strain K12).